A 674-amino-acid chain; its full sequence is Probable DNA helicase MCM9 (674 aa).

Residues 165–198 form a C4-type zinc finger; sequence CRKCKCRFTVHPELEAGNRITLPASCKSKSAKGC. Residues 318–521 form the MCM domain; the sequence is GRNSILKGIC…KWDKIVSSHI (204 aa). 368–375 contributes to the ATP binding site; that stretch reads GDPGTGKS. The short motif at 497–500 is the Arginine finger element; that stretch reads SRFD.

The protein belongs to the MCM family.

It localises to the nucleus. It carries out the reaction ATP + H2O = ADP + phosphate + H(+). Probable DNA helicase that may play a role in DNA repair during meiosis. This chain is Probable DNA helicase MCM9 (MCM9), found in Oryza sativa subsp. japonica (Rice).